The following is a 217-amino-acid chain: Ras-related protein Rab-39A (217 aa).

6 residues coordinate GTP: Ser-17, Gly-20, Lys-21, Ser-22, Cys-23, and Thr-44. Ser-22 is a binding site for Mg(2+). The tract at residues 39–47 (PACDPTVGV) is switch-I. Residues Thr-44 and Asp-68 each contribute to the Mg(2+) site. The GTP site is built by Gly-71, His-127, Lys-128, Asp-130, Ala-158, and Lys-159. A switch-II region spans residues 71-87 (GQERFRSITRSYYRNSV). 2 S-geranylgeranyl cysteine lipidation sites follow: Cys-215 and Cys-217. Cys-217 is subject to Cysteine methyl ester.

It belongs to the small GTPase superfamily. Rab family. Interacts (GDP-bound) with C9orf72; C9orf72 acts as a GEF for RAB39A. Interacts (GTP-bound) with HOPS complex components VPS39 and VPS41, and STX17; interaction between HOPS components and RAB39A contributes to obtaining a functional HOPS complex that promotes membrane fusion driven by STX17-SNAP29-VAMP8. Interacts with BECN1. Probably associates with the PI3K (PI3KC3/PI3K-III/class III phosphatidylinositol 3-kinase) complex. Interacts with UACA. Interacts with isoform a of RASSF1. Does not interact with isoform c of RASSF1. Mg(2+) is required as a cofactor. Prenylated. Prenylation is required for association with cellular membranes.

Its subcellular location is the cell membrane. It localises to the cytoplasmic vesicle. The protein resides in the phagosome membrane. The protein localises to the lysosome membrane. It is found in the autolysosome membrane. It catalyses the reaction GTP + H2O = GDP + phosphate + H(+). With respect to regulation, regulated by guanine nucleotide exchange factors (GEFs) including c9Orf72, which promote the exchange of bound GDP for free GTP. Regulated by GTPase activating proteins (GAPs) which increase the GTP hydrolysis activity. Inhibited by GDP dissociation inhibitors (GDIs). In terms of biological role, the small GTPases Rab are key regulators of intracellular membrane trafficking, from the formation of transport vesicles to their fusion with membranes. Rabs cycle between an inactive GDP-bound form and an active GTP-bound form that is able to recruit to membranes different sets of downstream effectors directly responsible for vesicle formation, movement, tethering and fusion. RAB39A regulates autophagosome-lysosome fusion via recruitment of the HOPS endosomal tethering complex onto lysosomes; this process involves lysosomal RAB39A and autophagosomal RAB2A recruitment of HOPS subcomplexes VPS41-VPS16-VPS18-VPS33A and VPS39-VPS11, respectively, which assemble into a functional complex to mediate membrane tethering and SNAREs-driven membrane fusion. Also negatively regulates lipopolysaccharide (LPS)-induced autophagosome formation in macrophages, possibly by implicating PI3K. Promotes the delivery of MHC-I molecules from the ER to phagosomes and the generation of peptide-loaded MHC-I complexes in phagosomes, thus enhancing antigen cross-presentation by dendritic cells. Plays a role in the maturation and acidification of phagosomes that engulf pathogens, such as S.aureus and M.tuberculosis. Plays a role in the fusion of phagosomes with lysosomes. May be involved in multiple neurite formation. The protein is Ras-related protein Rab-39A of Homo sapiens (Human).